The primary structure comprises 203 residues: Inositol diphosphatase DSP3 (203 aa).

The Tyrosine-protein phosphatase domain occupies 20–169; it reads NFSMVEDGIY…FDIVSLRQCL (150 aa). Residues 76–88 are WPD loop important for active site topology; sequence FGIEGKTDPPTPM. Residue Cys-112 is the Phosphocysteine intermediate of the active site.

This sequence belongs to the protein-tyrosine phosphatase family. Atypical dual-specificity phosphatase Siw14-like subfamily. Interacts with FLZ1. As to expression, highly expressed in roots, stems and flowers. Expressed at low levels in leaves and siliques.

The protein localises to the nucleus. It carries out the reaction 5-diphospho-1D-myo-inositol 1,2,3,4,6-pentakisphosphate + H2O = 1D-myo-inositol hexakisphosphate + phosphate + H(+). It catalyses the reaction 1,5-bis(diphospho)-1D-myo-inositol 2,3,4,6-tetrakisphosphate + H2O = 1-diphospho-1D-myo-inositol 2,3,4,5,6-pentakisphosphate + phosphate + 2 H(+). The catalysed reaction is 3,5-bis(diphospho)-1D-myo-inositol 1,2,4,6-tetrakisphosphate + H2O = 3-diphospho-1D-myo-inositol 1,2,4,5,6-pentakisphosphate + phosphate + 2 H(+). The enzyme catalyses 6-diphospho-1D-myo-inositol pentakisphosphate + H2O = 1D-myo-inositol hexakisphosphate + phosphate + H(+). Functionally, cleaves the beta-phosphate at the 5-position of soluble inositol pyrophosphates. Has highest activity on 5-diphosphoinositol 1,2,3,4,6-pentakisphosphate (5-InsP(7)), 1,5-bis-diphosphoinositol 2,3,4,6-tetrakisphosphate (1,5-InsP(8)) and 3,5-InsP(8). Possesses phosphotyrosine phosphatase activity in vitro. Dephosphorylates the phosphoinositides PI(3,5)P2. Hydrolyzes para-nitrophenyl phosphate and O-methylfluorescein phosphate in vitro. In Arabidopsis thaliana (Mouse-ear cress), this protein is Inositol diphosphatase DSP3.